Consider the following 460-residue polypeptide: Glucan endo-1,3-beta-D-glucosidase (460 aa).

Residues 1 to 26 (MAANVQTSSLLFLVFLLLQNFYSANS) form the signal peptide. Residue Glu-123 is the Proton donor of the active site. Residue Glu-268 is the Nucleophile of the active site. The disordered stretch occupies residues 352 to 371 (NTQNPTTPATPTPTPKAAGS). An N-linked (GlcNAc...) asparagine glycan is attached at Asn-355. Cys-373 and Cys-435 are disulfide-bonded. Residue Asn-447 is glycosylated (N-linked (GlcNAc...) asparagine).

Belongs to the glycosyl hydrolase 17 family. Homodimer. Glycosylated. In terms of processing, contains two additional disulfide bonds, but it is unclear if they are between the pairs Cys-392-Cys-398 and Cys-407-Cys-453 (PudMed:18096638) or between the pairs Cys-392-Cys-453 and Cys-398-Cys-407 (PudMed:12392450). Expressed only in pollen.

Its subcellular location is the secreted. The enzyme catalyses Hydrolysis of (1-&gt;3)-beta-D-glucosidic linkages in (1-&gt;3)-beta-D-glucans.. This chain is Glucan endo-1,3-beta-D-glucosidase (OLE9), found in Olea europaea (Common olive).